Reading from the N-terminus, the 235-residue chain is MSKTSKAYRAAAAKVDRTNLYTPLQAAKLAKETSSTKQDATVEVAIRLGVDPRKADQMVRGTVNLPHGTGKTARVAVFAVGEKADAAVAAGADVVGSDDLIERIQGGWLEFDAAIATPDQMAKVGRIARVLGPRGLMPNPKTGTVTADVAKAVADIKGGKINFRVDKQANLHFVIGKASFDEKLLAENYGAAIDEVLRLKPSSSKGRYLKKITVSTTTGPGIPVDPSITRNFAGE.

The protein belongs to the universal ribosomal protein uL1 family. In terms of assembly, part of the 50S ribosomal subunit.

Functionally, binds directly to 23S rRNA. The L1 stalk is quite mobile in the ribosome, and is involved in E site tRNA release. In terms of biological role, protein L1 is also a translational repressor protein, it controls the translation of the L11 operon by binding to its mRNA. The chain is Large ribosomal subunit protein uL1 from Mycobacterium tuberculosis (strain ATCC 25177 / H37Ra).